The sequence spans 372 residues: 4-hydroxy-3-methylbut-2-en-1-yl diphosphate synthase (flavodoxin) (372 aa).

[4Fe-4S] cluster contacts are provided by cysteine 270, cysteine 273, cysteine 305, and glutamate 312.

This sequence belongs to the IspG family. The cofactor is [4Fe-4S] cluster.

The enzyme catalyses (2E)-4-hydroxy-3-methylbut-2-enyl diphosphate + oxidized [flavodoxin] + H2O + 2 H(+) = 2-C-methyl-D-erythritol 2,4-cyclic diphosphate + reduced [flavodoxin]. Its pathway is isoprenoid biosynthesis; isopentenyl diphosphate biosynthesis via DXP pathway; isopentenyl diphosphate from 1-deoxy-D-xylulose 5-phosphate: step 5/6. In terms of biological role, converts 2C-methyl-D-erythritol 2,4-cyclodiphosphate (ME-2,4cPP) into 1-hydroxy-2-methyl-2-(E)-butenyl 4-diphosphate. This Salmonella choleraesuis (strain SC-B67) protein is 4-hydroxy-3-methylbut-2-en-1-yl diphosphate synthase (flavodoxin).